Consider the following 317-residue polypeptide: Protein lifeguard 2 (317 aa).

The tract at residues 1 to 54 (MTQGKLSVANKAPGTEGQQHQANGEKKDAPAVPSAPPSYEEATSGEGLKAGTFP) is disordered. 3 helical membrane-spanning segments follow: residues 107–127 (VYTI…LFTF), 139–159 (PGWY…LACC), and 166–186 (FPWN…LTGM). N-linked (GlcNAc...) asparagine glycosylation is present at asparagine 192. The next 4 helical transmembrane spans lie at 195 to 215 (SVLL…IFSF), 226 to 246 (GVLF…AVLL), 252 to 272 (PWLH…FLAF), and 291 to 311 (IFGA…FLQL).

It belongs to the BI1 family. LFG subfamily. In terms of assembly, interacts with FAS/TNFRSF6 and BAX. In terms of tissue distribution, brain. Highly expressed in cerebellum, also found in cortex, olfactory bulb, and hippocampus.

Its subcellular location is the cell membrane. The protein localises to the membrane raft. The protein resides in the postsynaptic cell membrane. Functionally, antiapoptotic protein which protects cells uniquely from Fas-induced apoptosis. Regulates Fas-mediated apoptosis in neurons by interfering with caspase-8 activation. Plays a role in cerebellar development by affecting cerebellar size, internal granular layer (IGL) thickness, and Purkinje cell (PC) development. The protein is Protein lifeguard 2 (Faim2) of Mus musculus (Mouse).